The following is a 239-amino-acid chain: MATNGRHQEVGHKSLLQSDALYQYILETSVYPREPEPMKELREITAKHPWNLMTTSADEGQFLSMLIKLINAKNTMEIGVFTGYSLLATAMALPDDGKILAMDINRENYEIGLPVIEKAGLAHKIEFKEGPALPVLDQMIEDGKYHGSYDFIFVDADKDNYLNYHKRLIDLVKIGGLIGYDNTLWNGSVVAPPDAPLRKYVRYYRDFVLELNKALAADSRIEICQLPVGDGITLCRRIS.

Residue Lys13 participates in substrate binding. S-adenosyl-L-methionine is bound by residues Thr55, Glu77, 79-80 (GV), Ser85, Asp103, and Ala132. Substrate is bound at residue Asp155. An a divalent metal cation-binding site is contributed by Asp155. Residue Asp157 coordinates S-adenosyl-L-methionine. Residues Asp181 and Asn182 each contribute to the a divalent metal cation site. Position 186 (Asn186) interacts with substrate.

This sequence belongs to the class I-like SAM-binding methyltransferase superfamily. Cation-dependent O-methyltransferase family. CCoAMT subfamily. Monomer. Mg(2+) is required as a cofactor. In terms of tissue distribution, mostly expressed in the bottom and middle parts of the stems.

It catalyses the reaction (E)-caffeoyl-CoA + S-adenosyl-L-methionine = (E)-feruloyl-CoA + S-adenosyl-L-homocysteine + H(+). Its pathway is aromatic compound metabolism; phenylpropanoid biosynthesis. Its function is as follows. Methylates caffeoyl-CoA to feruloyl-CoA and 5-hydroxyferuloyl-CoA to sinapoyl-CoA. Plays a role in the synthesis of feruloylated polysaccharides. Involved in the reinforcement of the plant cell wall. Also involved in the responding to wounding or pathogen challenge by the increased formation of cell wall-bound ferulic acid polymers. The polypeptide is Caffeoyl-CoA O-methyltransferase 1 (CCOAOMT1) (Nicotiana tabacum (Common tobacco)).